We begin with the raw amino-acid sequence, 130 residues long: Small ribosomal subunit protein uS8 (130 aa).

It belongs to the universal ribosomal protein uS8 family. As to quaternary structure, part of the 30S ribosomal subunit.

Functionally, one of the primary rRNA binding proteins, it binds directly to 16S rRNA central domain where it helps coordinate assembly of the platform of the 30S subunit. This is Small ribosomal subunit protein uS8 from Pyrobaculum calidifontis (strain DSM 21063 / JCM 11548 / VA1).